The chain runs to 557 residues: uncharacterized protein (557 aa).

Residues lysine 70 to glycine 224 form the Helicase ATP-binding domain. Alanine 82–threonine 90 lines the ATP pocket. A DEAH box motif is present at residues aspartate 175–histidine 178. Residues glutamine 363–leucine 524 form the Helicase C-terminal domain.

It belongs to the SNF2/RAD54 helicase family.

This is an uncharacterized protein from Bacillus subtilis (strain 168).